The chain runs to 137 residues: Small ribosomal subunit protein uS12 (137 aa).

2 disordered regions span residues 1-22 (MPTI…SKSP) and 37-57 (KNPS…TPKK). Positions 9-19 (RKGRKSHKGKS) are enriched in basic residues. At aspartate 102 the chain carries 3-methylthioaspartic acid.

This sequence belongs to the universal ribosomal protein uS12 family. Part of the 30S ribosomal subunit. Contacts proteins S8 and S17. May interact with IF1 in the 30S initiation complex.

With S4 and S5 plays an important role in translational accuracy. Its function is as follows. Interacts with and stabilizes bases of the 16S rRNA that are involved in tRNA selection in the A site and with the mRNA backbone. Located at the interface of the 30S and 50S subunits, it traverses the body of the 30S subunit contacting proteins on the other side and probably holding the rRNA structure together. The combined cluster of proteins S8, S12 and S17 appears to hold together the shoulder and platform of the 30S subunit. The sequence is that of Small ribosomal subunit protein uS12 from Limosilactobacillus fermentum (strain NBRC 3956 / LMG 18251) (Lactobacillus fermentum).